Consider the following 592-residue polypeptide: Putative RING finger protein ORF9 (592 aa).

An RING-type zinc finger spans residues 12 to 49; that stretch reads CCICLEEDIERVDTIPCQHTVCRPCYLKPMINKCPVCR. Residues 414 to 441 are a coiled coil; sequence WELIKREELLQRRYKREEQNLKYTSNRL.

The protein is Putative RING finger protein ORF9 of Ostreid herpesvirus 1 (isolate France) (OsHV-1).